The primary structure comprises 490 residues: Bifunctional protein HldE (490 aa).

The segment at 1–330 is ribokinase; sequence MERKEIESLF…AEIGHAHPDS (330 aa). Residue 205-208 participates in ATP binding; sequence NRKE. The active site involves Asp275. The tract at residues 356–490 is cytidylyltransferase; it reads FTNGCFDLLH…EKIRTGSIKE (135 aa).

The protein in the N-terminal section; belongs to the carbohydrate kinase PfkB family. This sequence in the C-terminal section; belongs to the cytidylyltransferase family. In terms of assembly, homodimer.

The catalysed reaction is D-glycero-beta-D-manno-heptose 7-phosphate + ATP = D-glycero-beta-D-manno-heptose 1,7-bisphosphate + ADP + H(+). It catalyses the reaction D-glycero-beta-D-manno-heptose 1-phosphate + ATP + H(+) = ADP-D-glycero-beta-D-manno-heptose + diphosphate. It functions in the pathway nucleotide-sugar biosynthesis; ADP-L-glycero-beta-D-manno-heptose biosynthesis; ADP-L-glycero-beta-D-manno-heptose from D-glycero-beta-D-manno-heptose 7-phosphate: step 1/4. The protein operates within nucleotide-sugar biosynthesis; ADP-L-glycero-beta-D-manno-heptose biosynthesis; ADP-L-glycero-beta-D-manno-heptose from D-glycero-beta-D-manno-heptose 7-phosphate: step 3/4. Its function is as follows. Catalyzes the phosphorylation of D-glycero-D-manno-heptose 7-phosphate at the C-1 position to selectively form D-glycero-beta-D-manno-heptose-1,7-bisphosphate. Catalyzes the ADP transfer from ATP to D-glycero-beta-D-manno-heptose 1-phosphate, yielding ADP-D-glycero-beta-D-manno-heptose. This chain is Bifunctional protein HldE, found in Geotalea uraniireducens (strain Rf4) (Geobacter uraniireducens).